Reading from the N-terminus, the 166-residue chain is Peptide methionine sulfoxide reductase MsrA (166 aa).

Cysteine 11 is an active-site residue.

The protein belongs to the MsrA Met sulfoxide reductase family.

It carries out the reaction L-methionyl-[protein] + [thioredoxin]-disulfide + H2O = L-methionyl-(S)-S-oxide-[protein] + [thioredoxin]-dithiol. The catalysed reaction is [thioredoxin]-disulfide + L-methionine + H2O = L-methionine (S)-S-oxide + [thioredoxin]-dithiol. Its function is as follows. Has an important function as a repair enzyme for proteins that have been inactivated by oxidation. Catalyzes the reversible oxidation-reduction of methionine sulfoxide in proteins to methionine. In Mycoplasmopsis pulmonis (strain UAB CTIP) (Mycoplasma pulmonis), this protein is Peptide methionine sulfoxide reductase MsrA.